The chain runs to 393 residues: Formate-dependent phosphoribosylglycinamide formyltransferase (393 aa).

N(1)-(5-phospho-beta-D-ribosyl)glycinamide contacts are provided by residues 22–23 (EL) and Glu-82. Residues Arg-114, Lys-155, 160-165 (SSGKGQ), 195-198 (EGFI), and Glu-203 contribute to the ATP site. Residues 119 to 308 (RLAAEELDLP…QFALHARAIL (190 aa)) enclose the ATP-grasp domain. Positions 267 and 279 each coordinate Mg(2+). N(1)-(5-phospho-beta-D-ribosyl)glycinamide contacts are provided by residues Asp-286, Lys-356, and 363 to 364 (RR).

The protein belongs to the PurK/PurT family. As to quaternary structure, homodimer.

The enzyme catalyses N(1)-(5-phospho-beta-D-ribosyl)glycinamide + formate + ATP = N(2)-formyl-N(1)-(5-phospho-beta-D-ribosyl)glycinamide + ADP + phosphate + H(+). It participates in purine metabolism; IMP biosynthesis via de novo pathway; N(2)-formyl-N(1)-(5-phospho-D-ribosyl)glycinamide from N(1)-(5-phospho-D-ribosyl)glycinamide (formate route): step 1/1. In terms of biological role, involved in the de novo purine biosynthesis. Catalyzes the transfer of formate to 5-phospho-ribosyl-glycinamide (GAR), producing 5-phospho-ribosyl-N-formylglycinamide (FGAR). Formate is provided by PurU via hydrolysis of 10-formyl-tetrahydrofolate. This chain is Formate-dependent phosphoribosylglycinamide formyltransferase, found in Pseudomonas putida (strain W619).